Here is a 423-residue protein sequence, read N- to C-terminus: UPF0229 protein PLES_05841 (423 aa).

Positions 84 to 107 are disordered; it reads AGEHIARPSGGGGGRGGGKASNSG. A compositionally biased stretch (gly residues) spans 92–102; that stretch reads SGGGGGRGGGK.

The protein belongs to the UPF0229 family.

The chain is UPF0229 protein PLES_05841 from Pseudomonas aeruginosa (strain LESB58).